The primary structure comprises 152 residues: 3-hydroxyacyl-[acyl-carrier-protein] dehydratase FabZ (152 aa).

H57 is an active-site residue.

Belongs to the thioester dehydratase family. FabZ subfamily.

The protein localises to the cytoplasm. It catalyses the reaction a (3R)-hydroxyacyl-[ACP] = a (2E)-enoyl-[ACP] + H2O. Functionally, involved in unsaturated fatty acids biosynthesis. Catalyzes the dehydration of short chain beta-hydroxyacyl-ACPs and long chain saturated and unsaturated beta-hydroxyacyl-ACPs. The protein is 3-hydroxyacyl-[acyl-carrier-protein] dehydratase FabZ of Bradyrhizobium sp. (strain ORS 278).